The primary structure comprises 94 residues: Aspartyl/glutamyl-tRNA(Asn/Gln) amidotransferase subunit C (94 aa).

Belongs to the GatC family. Heterotrimer of A, B and C subunits.

The enzyme catalyses L-glutamyl-tRNA(Gln) + L-glutamine + ATP + H2O = L-glutaminyl-tRNA(Gln) + L-glutamate + ADP + phosphate + H(+). It catalyses the reaction L-aspartyl-tRNA(Asn) + L-glutamine + ATP + H2O = L-asparaginyl-tRNA(Asn) + L-glutamate + ADP + phosphate + 2 H(+). In terms of biological role, allows the formation of correctly charged Asn-tRNA(Asn) or Gln-tRNA(Gln) through the transamidation of misacylated Asp-tRNA(Asn) or Glu-tRNA(Gln) in organisms which lack either or both of asparaginyl-tRNA or glutaminyl-tRNA synthetases. The reaction takes place in the presence of glutamine and ATP through an activated phospho-Asp-tRNA(Asn) or phospho-Glu-tRNA(Gln). The protein is Aspartyl/glutamyl-tRNA(Asn/Gln) amidotransferase subunit C of Carboxydothermus hydrogenoformans (strain ATCC BAA-161 / DSM 6008 / Z-2901).